Here is a 103-residue protein sequence, read N- to C-terminus: IQSLPLLALLALSGPGTSHAAVNQHLCGSHLVEALYLVCGERGFFYSPKARRDAEHPLVNGPLHGEVGDLPFQQEEFEKVKRGIVEQCCHNTCSLYQLENYCN.

The first 20 residues, 1 to 20 (IQSLPLLALLALSGPGTSHA), serve as a signal peptide directing secretion. Intrachain disulfides connect Cys-27-Cys-89, Cys-39-Cys-102, and Cys-88-Cys-93. Residues 53 to 80 (DAEHPLVNGPLHGEVGDLPFQQEEFEKV) constitute a propeptide, c peptide.

Belongs to the insulin family. As to quaternary structure, heterodimer of a B chain and an A chain linked by two disulfide bonds.

The protein localises to the secreted. Functionally, insulin decreases blood glucose concentration. It increases cell permeability to monosaccharides, amino acids and fatty acids. It accelerates glycolysis, the pentose phosphate cycle, and glycogen synthesis in liver. The polypeptide is Insulin (INS) (Selasphorus rufus (Rufous hummingbird)).